The following is a 76-amino-acid chain: Vasotab-TY1 (76 aa).

An N-terminal signal peptide occupies residues 1–21 (MKFTLFSVLVVLLIATFVAAD). One can recognise a Kazal-like domain in the interval 22 to 76 (DCPRICTADFRPVCGTPSGGRRSANRTFGNQCSLDSHNCLNKGDTYDKLHDGECK). 3 disulfide bridges follow: Cys23/Cys60, Cys27/Cys53, and Cys35/Cys75.

In terms of tissue distribution, expressed by the salivary gland.

It localises to the secreted. Functionally, vasodilator protein that inhibits vasoconstriction of isolated rat femoral artery induced by phenylephrine. Since platelet aggregation and vasoconstriction are key hemostatic responses, particularly in small wounds, this protein likely participates in the antihemostatic responses during blood feeding. Blocks L-type calcium channels (Cav1/CACNA1) in left ventricular myocytes isolated from rat hearts. The sequence is that of Vasotab-TY1 from Tabanus yao (Horsefly).